A 188-amino-acid chain; its full sequence is MSIKNDKWIRRMAEQHKMIEPFAPHLVSRCDERSIISYGTSSYGYDVRCADEFKIFTNINSAIVDPKQFDSKSFVDVQSDVCIIPPNSFALARTIEYFRIPRDVLTICLGKSTYARCGIIVNVTPLEPEWEGHVTLEFSNTTPLPAKIYAHEGVAQLLFLQADDVCETSYKDRKGKYQGQTGVTLPRA.

DCTP-binding positions include 111 to 116, 135 to 137, glutamine 156, tyrosine 170, and glutamine 180; these read KSTYAR and TLE. The Proton donor/acceptor role is filled by glutamate 137.

The protein belongs to the dCTP deaminase family. In terms of assembly, homotrimer.

It catalyses the reaction dCTP + H2O + H(+) = dUTP + NH4(+). It functions in the pathway pyrimidine metabolism; dUMP biosynthesis; dUMP from dCTP (dUTP route): step 1/2. Catalyzes the deamination of dCTP to dUTP. This is dCTP deaminase from Dichelobacter nodosus (strain VCS1703A).